The chain runs to 67 residues: Brevinin-1CDYc (67 aa).

Residues 1-22 (MFTLKKSLLLIFFLGTINLSLC) form the signal peptide. The propeptide occupies 23 to 45 (EEERNADEEERRDDPEERDVEVE). The cysteines at positions 61 and 67 are disulfide-linked.

This sequence belongs to the frog skin active peptide (FSAP) family. Brevinin subfamily. Expressed by the skin glands.

Its subcellular location is the secreted. In terms of biological role, antimicrobial peptide. This Rana huanrensis (Huanren frog) protein is Brevinin-1CDYc.